A 324-amino-acid chain; its full sequence is Phospho-N-acetylmuramoyl-pentapeptide-transferase (324 aa).

A run of 10 helical transmembrane segments spans residues 9–29 (TFAVAFIITVIGVPLFIPFLV), 53–73 (TMGAVIFITAMLISFLIFSFI), 77–97 (VSAATWLLFITLALFGALGFL), 117–137 (FLGQVAISILFYLVYHFSDFA), 149–169 (IDLGWFFIIFILFWLVGFSNA), 176–196 (LDGLVSGLSVIAFSAFGVIAF), 201–221 (MDVAIFCFAIVGGMLGFLLFN), 227–247 (IFMGDTGSLALGGSIAAVSIL), 253–273 (LLLLIGIIFVIETASVILQVF), and 304–324 (VLTFWGIGLIGAIISVCVVIF).

The protein belongs to the glycosyltransferase 4 family. MraY subfamily. Mg(2+) serves as cofactor.

Its subcellular location is the cell membrane. It catalyses the reaction UDP-N-acetyl-alpha-D-muramoyl-L-alanyl-gamma-D-glutamyl-meso-2,6-diaminopimeloyl-D-alanyl-D-alanine + di-trans,octa-cis-undecaprenyl phosphate = di-trans,octa-cis-undecaprenyl diphospho-N-acetyl-alpha-D-muramoyl-L-alanyl-D-glutamyl-meso-2,6-diaminopimeloyl-D-alanyl-D-alanine + UMP. Its pathway is cell wall biogenesis; peptidoglycan biosynthesis. Functionally, catalyzes the initial step of the lipid cycle reactions in the biosynthesis of the cell wall peptidoglycan: transfers peptidoglycan precursor phospho-MurNAc-pentapeptide from UDP-MurNAc-pentapeptide onto the lipid carrier undecaprenyl phosphate, yielding undecaprenyl-pyrophosphoryl-MurNAc-pentapeptide, known as lipid I. The polypeptide is Phospho-N-acetylmuramoyl-pentapeptide-transferase (Listeria innocua serovar 6a (strain ATCC BAA-680 / CLIP 11262)).